Here is a 141-residue protein sequence, read N- to C-terminus: Putative phosphatidylglycerol/phosphatidylinositol transfer protein DDB_G0278295 (141 aa).

The first 19 residues, 1–19, serve as a signal peptide directing secretion; sequence MRLLLALFFVLALVSPSFT. N-linked (GlcNAc...) asparagine glycosylation is found at asparagine 82 and asparagine 104.

This sequence belongs to the NPC2 family. Monomer.

Functionally, catalyzes the intermembrane transfer of phosphatidylglycerol and phosphatidylinositol. This is Putative phosphatidylglycerol/phosphatidylinositol transfer protein DDB_G0278295 from Dictyostelium discoideum (Social amoeba).